Reading from the N-terminus, the 242-residue chain is Aliphatic sulfonates import ATP-binding protein SsuB 1 (242 aa).

Residues Val11 to Leu227 enclose the ABC transporter domain. Gly43–Thr50 lines the ATP pocket.

This sequence belongs to the ABC transporter superfamily. Aliphatic sulfonates importer (TC 3.A.1.17.2) family. As to quaternary structure, the complex is composed of two ATP-binding proteins (SsuB), two transmembrane proteins (SsuC) and a solute-binding protein (SsuA).

Its subcellular location is the cell inner membrane. It catalyses the reaction ATP + H2O + aliphatic sulfonate-[sulfonate-binding protein]Side 1 = ADP + phosphate + aliphatic sulfonateSide 2 + [sulfonate-binding protein]Side 1.. In terms of biological role, part of the ABC transporter complex SsuABC involved in aliphatic sulfonates import. Responsible for energy coupling to the transport system. The sequence is that of Aliphatic sulfonates import ATP-binding protein SsuB 1 from Paracoccus denitrificans (strain Pd 1222).